Consider the following 348-residue polypeptide: Replication-associated protein (348 aa).

A compositionally biased stretch (low complexity) spans 1-17 (MRAPASSAASNRPGPSN). The segment at 1-22 (MRAPASSAASNRPGPSNHPTPR) is disordered. A CRESS-DNA virus Rep endonuclease domain is found at 22–125 (RWNSKQFFLT…NGDSDEMGEL (104 aa)). Residues 29-32 (FLTY) carry the RCR-1 motif. A divalent metal cation-binding residues include Glu-63, His-71, and His-73. The RCR-2 motif lies at 71–73 (HLH). Tyr-111 serves as the catalytic For DNA cleavage activity. Positions 111–114 (YISK) match the RCR-3 motif. The interval 176–188 (SAAALFTEPPPVY) is oligomerization. Position 228–235 (228–235 (GPSRTGKT)) interacts with ATP. Positions 251-269 (VDFTHYDKDAIYNVIDDVP) are transactivation. Residues 291–301 (KYGKKKKIPGG) carry the Nuclear localization signal motif.

This sequence belongs to the geminiviridae Rep protein family. Homooligomer. Rep binds to repeated DNA motifs (iterons). Forms the O-complex, which is a Rep-DNA complex involved in the initiation of RCR. Part of the C- and V-complexes which are RepA-Rep-DNA complexes involved in the c-sense and v-sense transcription. Mg(2+) is required as a cofactor. The cofactor is Mn(2+).

Its subcellular location is the host nucleus. Essential for the replication of viral ssDNA. The closed circular ssDNA genome is first converted to a superhelical dsDNA. Rep binds a specific region at the genome origin of replication. It introduces an endonucleolytic nick within the conserved sequence 5'-TAATATTAC-3' in the intergenic region of the genome present in all geminiviruses, thereby initiating the rolling circle replication (RCR). Following cleavage, binds covalently to the 5'-phosphate of DNA as a tyrosyl ester. The cleavage gives rise to a free 3'-OH that serves as a primer for the cellular DNA polymerase. The polymerase synthesizes the (+) strand DNA by rolling circle mechanism. After one round of replication, a Rep-catalyzed nucleotidyl transfer reaction releases a circular single-stranded virus genome, thereby terminating the replication. Displays origin-specific DNA cleavage, nucleotidyl transferase, ATPase and helicase activities. Acts as an inhibitor of C-sense gene transcription. The protein is Replication-associated protein of Miscanthus streak virus (isolate 91) (MiSV).